A 343-amino-acid chain; its full sequence is UDP-3-O-acylglucosamine N-acyltransferase 2 (343 aa).

The active-site Proton acceptor is His251.

This sequence belongs to the transferase hexapeptide repeat family. LpxD subfamily. Homotrimer.

It catalyses the reaction a UDP-3-O-[(3R)-3-hydroxyacyl]-alpha-D-glucosamine + a (3R)-hydroxyacyl-[ACP] = a UDP-2-N,3-O-bis[(3R)-3-hydroxyacyl]-alpha-D-glucosamine + holo-[ACP] + H(+). It participates in bacterial outer membrane biogenesis; LPS lipid A biosynthesis. Its function is as follows. Catalyzes the N-acylation of UDP-3-O-acylglucosamine using 3-hydroxyacyl-ACP as the acyl donor. Is involved in the biosynthesis of lipid A, a phosphorylated glycolipid that anchors the lipopolysaccharide to the outer membrane of the cell. This chain is UDP-3-O-acylglucosamine N-acyltransferase 2, found in Legionella pneumophila (strain Lens).